Reading from the N-terminus, the 1073-residue chain is Semaphorin-6D (1073 aa).

Positions 1–20 (MRVFLLCAYILLLMVSQLRA) are cleaved as a signal peptide. The Extracellular portion of the chain corresponds to 21–662 (VSFPEDDEPL…GESNQMVHMN (642 aa)). The region spanning 27-512 (DEPLNTVDYH…FSSCIIRIPL (486 aa)) is the Sema domain. A glycan (N-linked (GlcNAc...) asparagine) is linked at asparagine 51. Intrachain disulfides connect cysteine 108–cysteine 118, cysteine 136–cysteine 145, cysteine 259–cysteine 370, and cysteine 284–cysteine 329. Asparagine 283 carries N-linked (GlcNAc...) asparagine glycosylation. Residues asparagine 435 and asparagine 461 are each glycosylated (N-linked (GlcNAc...) asparagine). 4 cysteine pairs are disulfide-bonded: cysteine 477/cysteine 506, cysteine 515/cysteine 533, cysteine 521/cysteine 568, and cysteine 525/cysteine 541. One can recognise a PSI domain in the interval 514 to 569 (RCERYGSCKKSCIASRDPYCGWLSQGSCGRVTPGMLAEGYEQDTEFGNTAHLGDCH). A glycan (N-linked (GlcNAc...) asparagine) is linked at asparagine 631. Residues 663 to 683 (VLITCVFAAFVLGAFIAGVAV) form a helical membrane-spanning segment. At 684 to 1073 (YCYRDMFVRK…SVRPLNKYTY (390 aa)) the chain is on the cytoplasmic side. 3 positions are modified to phosphoserine: serine 723, serine 734, and serine 744. Disordered stretches follow at residues 744–775 (SRKE…PTPE), 787–825 (AMKS…GHIP), 839–874 (TSFS…RSVD), 914–1005 (SMSE…PTPT), and 1021–1073 (LQPS…KYTY). Position 773 is a phosphothreonine (threonine 773). A compositionally biased stretch (basic and acidic residues) spans 790–805 (SHSEKAHGHGASRKET). Phosphoserine is present on residues serine 931, serine 957, and serine 983. Residues 931-942 (SPPSTLPRNSPT) show a composition bias toward polar residues. 2 stretches are compositionally biased toward polar residues: residues 980–995 (NLNS…QPSM) and 1021–1037 (LQPS…NGTL).

It belongs to the semaphorin family.

The protein resides in the cell membrane. The protein localises to the cytoplasm. In terms of biological role, shows growth cone collapsing activity on dorsal root ganglion (DRG) neurons in vitro. May be a stop signal for the DRG neurons in their target areas, and possibly also for other neurons. May also be involved in the maintenance and remodeling of neuronal connections. Ligand of TREM2 with PLXNA1 as coreceptor in dendritic cells, plays a role in the generation of immune responses and skeletal homeostasis. This is Semaphorin-6D from Homo sapiens (Human).